We begin with the raw amino-acid sequence, 484 residues long: Glutamate--tRNA ligase (484 aa).

The short motif at 11 to 21 (PSPTGYLHIGN) is the 'HIGH' region element. A 'KMSKS' region motif is present at residues 252-256 (KLSKR). Lys255 serves as a coordination point for ATP.

Belongs to the class-I aminoacyl-tRNA synthetase family. Glutamate--tRNA ligase type 1 subfamily. In terms of assembly, monomer.

The protein resides in the cytoplasm. The enzyme catalyses tRNA(Glu) + L-glutamate + ATP = L-glutamyl-tRNA(Glu) + AMP + diphosphate. In terms of biological role, catalyzes the attachment of glutamate to tRNA(Glu) in a two-step reaction: glutamate is first activated by ATP to form Glu-AMP and then transferred to the acceptor end of tRNA(Glu). In Staphylococcus aureus (strain MRSA252), this protein is Glutamate--tRNA ligase.